Here is a 1529-residue protein sequence, read N- to C-terminus: Mediator of RNA polymerase II transcription subunit 1.1 (1529 aa).

3 disordered regions span residues 685–740, 807–919, and 933–1529; these read PDAA…VVGE, QYRM…MRDN, and PDIE…IDDE. The segment covering 693-702 has biased composition (basic residues); it reads GKQRKPRAKK. 2 stretches are compositionally biased toward low complexity: residues 722–739 and 807–828; these read GAAAVGAGSGRKSSGVVG and QYRMHMQQQQLQQQQMQSPQQQ. The segment covering 894–905 has biased composition (pro residues); it reads TPSPLSAPPKPF. Basic and acidic residues predominate over residues 908–919; the sequence is EQHHFGTKMRDN. Composition is skewed to low complexity over residues 958 to 990 and 1008 to 1023; these read SSSSDPSTSGESSNATESASSAPLMKPPTTAQT and QEQALQKQEQQRIQQQ. Residues 1008-1032 adopt a coiled-coil conformation; that stretch reads QEQALQKQEQQRIQQQDSVDSTNSE. 3 stretches are compositionally biased toward polar residues: residues 1051–1061, 1068–1089, and 1096–1105; these read NQVNRVMNMSN, GSSTNTSDIKPSLASLQKSTGS, and TPGTSSNIAQ. Basic and acidic residues-rich tracts occupy residues 1113-1130, 1137-1185, 1192-1240, and 1262-1278; these read LKKEVEEQPPEREKEKLI, LKVD…ERDK, RDRT…KELS, and PKKDTVDEDKKEPKDES. Residues 1169-1202 adopt a coiled-coil conformation; it reads EKEDKSQREKDKKERDKERKRRDRDRTEAKKEKD. Residues 1279 to 1288 are compositionally biased toward low complexity; sequence IPGPSTSSES. Over residues 1289 to 1304 the composition is skewed to basic and acidic residues; that stretch reads STRKEVAPAPISRKES. Over residues 1349-1365 the composition is skewed to low complexity; it reads SYSGSSNAGPISSSSRG. 2 stretches are compositionally biased toward pro residues: residues 1375-1386 and 1477-1500; these read PVLPPPALPMRG and QPPPPPQMIPLPKENPPPPLAPPS.

This sequence belongs to the Mediator complex subunit 1 family. Component of the Mediator complex.

It localises to the nucleus. Functionally, component of the Mediator complex, a coactivator involved in the regulated transcription of nearly all RNA polymerase II-dependent genes. Mediator functions as a bridge to convey information from gene-specific regulatory proteins to the basal RNA polymerase II transcription machinery. Mediator is recruited to promoters by direct interactions with regulatory proteins and serves as a scaffold for the assembly of a functional preinitiation complex with RNA polymerase II and the general transcription factors. This is Mediator of RNA polymerase II transcription subunit 1.1 (sop-3) from Caenorhabditis briggsae.